A 290-amino-acid chain; its full sequence is Glycine--tRNA ligase alpha subunit (290 aa).

It belongs to the class-II aminoacyl-tRNA synthetase family. In terms of assembly, tetramer of two alpha and two beta subunits.

The protein localises to the cytoplasm. The enzyme catalyses tRNA(Gly) + glycine + ATP = glycyl-tRNA(Gly) + AMP + diphosphate. This is Glycine--tRNA ligase alpha subunit from Fusobacterium nucleatum subsp. nucleatum (strain ATCC 25586 / DSM 15643 / BCRC 10681 / CIP 101130 / JCM 8532 / KCTC 2640 / LMG 13131 / VPI 4355).